An 80-amino-acid polypeptide reads, in one-letter code: RNA-binding protein KhpA (80 aa).

One can recognise a KH domain in the interval 33 to 80; it reads GRTVEVHVHPDDLGKVIGRGGRTATALRKLVAGIGGRGIRVDVVDTDQ.

This sequence belongs to the KhpA RNA-binding protein family.

Its subcellular location is the cytoplasm. Its function is as follows. A probable RNA-binding protein. In Mycobacterium leprae (strain TN), this protein is RNA-binding protein KhpA.